The following is a 60-amino-acid chain: MAVPKRKKSKSRRNMHRSHCKLKVPNIGIDKTTGEYKLSHHICLGGYYNGKQIVEVDSNI.

The protein belongs to the bacterial ribosomal protein bL32 family.

This Ehrlichia ruminantium (strain Gardel) protein is Large ribosomal subunit protein bL32.